We begin with the raw amino-acid sequence, 147 residues long: Small ribosomal subunit protein uS12 (147 aa).

Belongs to the universal ribosomal protein uS12 family. In terms of assembly, part of the 30S ribosomal subunit.

Its function is as follows. With S4 and S5 plays an important role in translational accuracy. Located at the interface of the 30S and 50S subunits. This Methanococcus maripaludis (strain DSM 14266 / JCM 13030 / NBRC 101832 / S2 / LL) protein is Small ribosomal subunit protein uS12.